A 271-amino-acid chain; its full sequence is Phosphate import ATP-binding protein PstB 2 (271 aa).

The tract at residues 1–20 is disordered; the sequence is MLTKKPEINTILQTTPDPHS. The 242-residue stretch at 25–266 folds into the ABC transporter domain; that stretch reads MATEDLHVYY…PQEKQTEDYI (242 aa). 57 to 64 contacts ATP; sequence GPSGCGKS.

The protein belongs to the ABC transporter superfamily. Phosphate importer (TC 3.A.1.7) family. In terms of assembly, the complex is composed of two ATP-binding proteins (PstB), two transmembrane proteins (PstC and PstA) and a solute-binding protein (PstS).

Its subcellular location is the cell membrane. The catalysed reaction is phosphate(out) + ATP + H2O = ADP + 2 phosphate(in) + H(+). Its function is as follows. Part of the ABC transporter complex PstSACB involved in phosphate import. Responsible for energy coupling to the transport system. The protein is Phosphate import ATP-binding protein PstB 2 of Listeria innocua serovar 6a (strain ATCC BAA-680 / CLIP 11262).